A 121-amino-acid chain; its full sequence is Small ribosomal subunit protein uS13 (121 aa).

The disordered stretch occupies residues 91 to 121; it reads HRRGLPVRGQNTKNNARTRKGKKASMAGKKK. Over residues 106-121 the composition is skewed to basic residues; it reads ARTRKGKKASMAGKKK.

It belongs to the universal ribosomal protein uS13 family. Part of the 30S ribosomal subunit. Forms a loose heterodimer with protein S19. Forms two bridges to the 50S subunit in the 70S ribosome.

Located at the top of the head of the 30S subunit, it contacts several helices of the 16S rRNA. In the 70S ribosome it contacts the 23S rRNA (bridge B1a) and protein L5 of the 50S subunit (bridge B1b), connecting the 2 subunits; these bridges are implicated in subunit movement. Contacts the tRNAs in the A and P-sites. This chain is Small ribosomal subunit protein uS13, found in Lacticaseibacillus paracasei (strain ATCC 334 / BCRC 17002 / CCUG 31169 / CIP 107868 / KCTC 3260 / NRRL B-441) (Lactobacillus paracasei).